Reading from the N-terminus, the 1007-residue chain is Serine/threonine-protein kinase atg1 (1007 aa).

The Protein kinase domain occupies 30–336 (YTRLSEIGRG…FDVYFAHKVL (307 aa)). Residues 36-44 (IGRGSFAVV) and lysine 59 contribute to the ATP site. The Proton acceptor role is filled by aspartate 174. Disordered regions lie at residues 343–489 (LVAD…KEHA), 524–586 (GGQA…PTSA), 795–817 (RLPS…GSGT), and 878–900 (SRPG…DGGQ). The span at 373–387 (MKRENALSGGVRDEP) shows a compositional bias: basic and acidic residues. The span at 396–410 (AMTQSPRPETPSTPM) shows a compositional bias: polar residues. Over residues 477–489 (KPVEKAKDEKEHA) the composition is skewed to basic and acidic residues. The segment covering 534-555 (SGAAPGTPPAGGSSPHASPSKA) has biased composition (low complexity). The segment covering 563-579 (SRADSAHVRQNSYDRRY) has biased composition (basic and acidic residues). Low complexity predominate over residues 805-817 (SNLSVGSSLGSGT). A compositionally biased stretch (basic and acidic residues) spans 887–896 (DRADARRDNE).

It belongs to the protein kinase superfamily. Ser/Thr protein kinase family. APG1/unc-51/ULK1 subfamily. Homodimer. Forms a ternary complex with ATG13 and ATG17.

Its subcellular location is the cytoplasm. It is found in the preautophagosomal structure membrane. It carries out the reaction L-seryl-[protein] + ATP = O-phospho-L-seryl-[protein] + ADP + H(+). It catalyses the reaction L-threonyl-[protein] + ATP = O-phospho-L-threonyl-[protein] + ADP + H(+). Functionally, serine/threonine protein kinase involved in the cytoplasm to vacuole transport (Cvt) and found to be essential in autophagy, where it is required for the formation of autophagosomes. Involved in the clearance of protein aggregates which cannot be efficiently cleared by the proteasome. Required for selective autophagic degradation of the nucleus (nucleophagy) as well as for mitophagy which contributes to regulate mitochondrial quantity and quality by eliminating the mitochondria to a basal level to fulfill cellular energy requirements and preventing excess ROS production. Also involved in endoplasmic reticulum-specific autophagic process, in selective removal of ER-associated degradation (ERAD) substrates. Plays a key role in ATG9 and ATG23 cycling through the pre-autophagosomal structure and is necessary to promote ATG18 binding to ATG9 through phosphorylation of ATG9. Catalyzes phosphorylation of ATG4, decreasing the interaction between ATG4 and ATG8 and impairing deconjugation of PE-conjugated forms of ATG8. The chain is Serine/threonine-protein kinase atg1 from Aspergillus niger (strain ATCC MYA-4892 / CBS 513.88 / FGSC A1513).